The following is a 313-amino-acid chain: Ribosomal RNA small subunit methyltransferase H (313 aa).

S-adenosyl-L-methionine-binding positions include 35 to 37 (GGH), Asp-55, Phe-79, Asp-100, and Gln-107.

This sequence belongs to the methyltransferase superfamily. RsmH family.

The protein resides in the cytoplasm. It catalyses the reaction cytidine(1402) in 16S rRNA + S-adenosyl-L-methionine = N(4)-methylcytidine(1402) in 16S rRNA + S-adenosyl-L-homocysteine + H(+). Its function is as follows. Specifically methylates the N4 position of cytidine in position 1402 (C1402) of 16S rRNA. The protein is Ribosomal RNA small subunit methyltransferase H of Burkholderia ambifaria (strain ATCC BAA-244 / DSM 16087 / CCUG 44356 / LMG 19182 / AMMD) (Burkholderia cepacia (strain AMMD)).